Reading from the N-terminus, the 204-residue chain is Tat proofreading chaperone DmsD (204 aa).

It belongs to the TorD/DmsD family. DmsD subfamily.

Functionally, required for biogenesis/assembly of DMSO reductase, but not for the interaction of the DmsA signal peptide with the Tat system. May be part of a chaperone cascade complex that facilitates a folding-maturation pathway for the substrate protein. In Salmonella paratyphi A (strain ATCC 9150 / SARB42), this protein is Tat proofreading chaperone DmsD.